We begin with the raw amino-acid sequence, 462 residues long: Major capsid protein (462 aa).

The protein belongs to the NCLDV major capsid protein family. In terms of assembly, homotrimer.

It localises to the virion. Major capsid protein that self assembles to form an icosahedral capsid. Represents around 50% of the total virion protein mass. This chain is Major capsid protein (MCP), found in Costelytra zealandica (CzIV).